The primary structure comprises 116 residues: MKYFVVALTLAVAFVCIEECKTVEIGYAVSEDFDQNEIDNEEARQAFKTFTPDWNKIRNDAKRMQDNLEQMKKRFNLNLEEARQAFQTFKPDWNKIRYDAMKMQTSLGQMKKRFNL.

A signal peptide spans 1–22 (MKYFVVALTLAVAFVCIEECKT). Propeptides lie at residues 23-44 (VEIG…EEAR) and 80-83 (EEAR). 2 short sequence motifs (processing quadruplet motif) span residues 41 to 44 (EEAR) and 80 to 83 (EEAR). Pyrrolidone carboxylic acid is present on Gln84.

The protein belongs to the cationic peptide 03 (latarcin) family. 06 subfamily. Post-translationally, cleavage of the propeptide depends on the processing quadruplet motif (XXXR, with at least one of X being E). As to expression, expressed by the venom gland.

Its subcellular location is the secreted. In terms of biological role, does not have antimicrobial activity against neither Gram-positive bacteria (A.globiformis VKM Ac-1112 (MIC&gt;70 uM), and B.subtilis VKM B-501 (MIC&gt;70 uM)), nor Gram-negative bacteria (E.coli DH5-alpha (MIC&gt;70 uM), E.coli MH1 (MIC&gt;70 uM), and P.aeruginosa PAO1 (MIC&gt;70 uM)), nor yeasts (P.pastoris GS115 (MIC&gt;70 uM), and S.cerevisiae Y190 (MIC&gt;70 uM)). Does not have hemolytic activity against rabbit erythrocytes. However, it causes some conductance changes in planar bilayer membranes, without membrane rupture, suggesting a cytolytic function on other biological targets. It causes paralysis, but is not lethal when injected into insect (M.domestica) larvae. This chain is M-zodatoxin-Lt6a/b, found in Lachesana tarabaevi (Spider).